The primary structure comprises 411 residues: Argininosuccinate synthase (411 aa).

Residues 10–18 (AYSGGLDTS) and A37 each bind ATP. Residues Y89 and S94 each coordinate L-citrulline. G119 lines the ATP pocket. Residues T121, N125, and D126 each coordinate L-aspartate. N125 contributes to the L-citrulline binding site. Residues R129, S178, S187, E263, and Y275 each coordinate L-citrulline.

The protein belongs to the argininosuccinate synthase family. Type 1 subfamily. In terms of assembly, homotetramer.

Its subcellular location is the cytoplasm. The enzyme catalyses L-citrulline + L-aspartate + ATP = 2-(N(omega)-L-arginino)succinate + AMP + diphosphate + H(+). It functions in the pathway amino-acid biosynthesis; L-arginine biosynthesis; L-arginine from L-ornithine and carbamoyl phosphate: step 2/3. The sequence is that of Argininosuccinate synthase from Aeromonas hydrophila subsp. hydrophila (strain ATCC 7966 / DSM 30187 / BCRC 13018 / CCUG 14551 / JCM 1027 / KCTC 2358 / NCIMB 9240 / NCTC 8049).